The chain runs to 594 residues: MHRYRSHTCEELRPSDVGGTVRLSGWVHRVRDHGGLLFIDLRDHYGITQIVADPDSPSFSTAEKLRSEWVIRVDGEVKARTPETVNPNLATGGVEVFAREIEVLSQAKELPLPVFGEPDYPEDIRLKYRFLDLRRETLHRNILARTKIIAEMRKRMAESGFTEFSTPILTASSPEGARDFLVPSRLHQGKFYALPQAPQIYKQLIMVSGFDRYFQIAPCFRDEDPRADRLPGEFYQLDLEMSFVTQEDVFSTMEPVMRGIFEAFAEGKPVTQKLPRIPYDEAMRKYGSDKPDLRNPIVMEEVSEHFRGSGFKVFANILANDPKAEVWAIPAKTGGSRAFCDRMNSWAQGEGQPGLGYIFWRKEGDTLEGAGPIAKNIGPERTDAIRTQLGLGDGDACFFVAGDPKKFVAFAGAARTRAGEELNLVDRDRFELAWIVDFPFYEWNEDEKRIEFGHNPFSMPQGGMEALENQEPLSIKAFQYDLVCNGFEIASGGIRNHMPELMVKAFEVAGFDRQMVEERFGGLYRAFQYGAPPHGGMAAGIDRIVMLLRGAKNLREITMFPMNQQAMDLLMGAPSEATPQQLRELHIRLAPKQD.

Glu-175 contacts L-aspartate. The interval 199–202 (QIYK) is aspartate. L-aspartate contacts are provided by Arg-221 and His-454. 221-223 (RDE) contributes to the ATP binding site. Glu-488 provides a ligand contact to ATP. Arg-495 is a binding site for L-aspartate. Residue 540–543 (GIDR) participates in ATP binding.

Belongs to the class-II aminoacyl-tRNA synthetase family. Type 1 subfamily. Homodimer.

The protein resides in the cytoplasm. It carries out the reaction tRNA(Asx) + L-aspartate + ATP = L-aspartyl-tRNA(Asx) + AMP + diphosphate. Functionally, aspartyl-tRNA synthetase with relaxed tRNA specificity since it is able to aspartylate not only its cognate tRNA(Asp) but also tRNA(Asn). Reaction proceeds in two steps: L-aspartate is first activated by ATP to form Asp-AMP and then transferred to the acceptor end of tRNA(Asp/Asn). The protein is Aspartate--tRNA(Asp/Asn) ligase of Chelativorans sp. (strain BNC1).